We begin with the raw amino-acid sequence, 153 residues long: MRCPFCGQDDTQVKDSRPTDDNAAIRRRRACPGCGSRFTTFERVQIRDLVVVKKDGSRSTFDREKVVKSLQIALRKRPVEDDQIERIANGIYRRLESLGENEVPSKLIGELVMDVLMEMDQVAYLRYASVYRNFREAKDFGDFLGKMGTSSGD.

Residues 3–34 (CPFCGQDDTQVKDSRPTDDNAAIRRRRACPGC) fold into a zinc finger. The 91-residue stretch at 49 to 139 (LVVVKKDGSR…VYRNFREAKD (91 aa)) folds into the ATP-cone domain.

This sequence belongs to the NrdR family. Requires Zn(2+) as cofactor.

In terms of biological role, negatively regulates transcription of bacterial ribonucleotide reductase nrd genes and operons by binding to NrdR-boxes. This is Transcriptional repressor NrdR 2 from Paramagnetospirillum magneticum (strain ATCC 700264 / AMB-1) (Magnetospirillum magneticum).